A 206-amino-acid chain; its full sequence is Outer-membrane lipoprotein carrier protein (206 aa).

Positions Met1–Ala21 are cleaved as a signal peptide.

This sequence belongs to the LolA family. As to quaternary structure, monomer.

The protein resides in the periplasm. Functionally, participates in the translocation of lipoproteins from the inner membrane to the outer membrane. Only forms a complex with a lipoprotein if the residue after the N-terminal Cys is not an aspartate (The Asp acts as a targeting signal to indicate that the lipoprotein should stay in the inner membrane). The sequence is that of Outer-membrane lipoprotein carrier protein from Shewanella oneidensis (strain ATCC 700550 / JCM 31522 / CIP 106686 / LMG 19005 / NCIMB 14063 / MR-1).